Reading from the N-terminus, the 1479-residue chain is Type VII secretion system protein EssC (1479 aa).

Residues 1-229 (MHKLIIKYNK…RPPQPIQKNN (229 aa)) lie on the Cytoplasmic side of the membrane. A helical membrane pass occupies residues 230-252 (TVIWRSIIPPLVMIALTVVIFLV). The Extracellular portion of the chain corresponds to 253 to 256 (RPIG). The helical transmembrane segment at 257–279 (IYILMMIGMSSVTIVFGITTYFS) threads the bilayer. At 280–1479 (EKKKYNKDVE…QAYQKIRWFK (1200 aa)) the chain is on the cytoplasmic side. 2 FtsK domains span residues 652–846 (DDIL…QDSN) and 997–1183 (QGPM…SEVS). ATP contacts are provided by residues 672 to 679 (GTTGSGKS) and 1014 to 1021 (GSPGYGRT).

The protein belongs to the EssC family. Homooligomer. Interacts with EsaE.

Its subcellular location is the cell membrane. Its function is as follows. Component of the type VII secretion system (Ess). Required for the secretion of substrates including EsxA and EsxB. However, unable to support secretion of the substrate protein EsxC. This chain is Type VII secretion system protein EssC, found in Staphylococcus aureus (strain MSSA476).